The primary structure comprises 395 residues: Elongation factor Tu (395 aa).

Residues 10–204 (KPHVNVGTIG…AVDEYIPEPT (195 aa)) enclose the tr-type G domain. The segment at 19–26 (GHVDHGKT) is G1. Residue 19–26 (GHVDHGKT) participates in GTP binding. A Mg(2+)-binding site is contributed by Thr26. Positions 60 to 64 (GITIA) are G2. The G3 stretch occupies residues 81–84 (DCPG). GTP contacts are provided by residues 81-85 (DCPGH) and 136-139 (NKVD). A G4 region spans residues 136-139 (NKVD). The segment at 174–176 (SAL) is G5.

The protein belongs to the TRAFAC class translation factor GTPase superfamily. Classic translation factor GTPase family. EF-Tu/EF-1A subfamily. As to quaternary structure, monomer.

Its subcellular location is the cytoplasm. It catalyses the reaction GTP + H2O = GDP + phosphate + H(+). In terms of biological role, GTP hydrolase that promotes the GTP-dependent binding of aminoacyl-tRNA to the A-site of ribosomes during protein biosynthesis. The protein is Elongation factor Tu of Exiguobacterium sibiricum (strain DSM 17290 / CCUG 55495 / CIP 109462 / JCM 13490 / 255-15).